A 505-amino-acid polypeptide reads, in one-letter code: Glutamyl-tRNA(Gln) amidotransferase subunit A (505 aa).

Catalysis depends on charge relay system residues Lys-80 and Ser-155. Ser-179 acts as the Acyl-ester intermediate in catalysis.

This sequence belongs to the amidase family. GatA subfamily. As to quaternary structure, heterotrimer of A, B and C subunits.

It catalyses the reaction L-glutamyl-tRNA(Gln) + L-glutamine + ATP + H2O = L-glutaminyl-tRNA(Gln) + L-glutamate + ADP + phosphate + H(+). Allows the formation of correctly charged Gln-tRNA(Gln) through the transamidation of misacylated Glu-tRNA(Gln) in organisms which lack glutaminyl-tRNA synthetase. The reaction takes place in the presence of glutamine and ATP through an activated gamma-phospho-Glu-tRNA(Gln). The protein is Glutamyl-tRNA(Gln) amidotransferase subunit A of Acidothermus cellulolyticus (strain ATCC 43068 / DSM 8971 / 11B).